We begin with the raw amino-acid sequence, 299 residues long: Ankyrin repeat domain-containing protein 54 (299 aa).

Residues Met-1–Pro-27 form a disordered region. Ala-2 bears the N-acetylalanine mark. Residue Ser-62 is modified to Phosphoserine. The short motif at Arg-98 to Ser-116 is the Nuclear localization signal (NLS) element. 4 ANK repeats span residues His-108 to Ala-137, Lys-141 to Gln-170, Leu-174 to Ala-203, and Ala-207 to Gln-239. Residues Asp-140 to Ile-240 are LYN-binding. Residues Leu-282–Gln-292 carry the Nuclear export signal (NES) motif.

Interacts (via ankyrin repeat region) with LYN (via SH3-domain) in an activation-independent status of LYN. Forms a multiprotein complex with LYN and HCLS1. Interacts with TSN2, VAV1, DBNL and LASP1.

The protein localises to the nucleus. It localises to the cytoplasm. Its subcellular location is the midbody. Functionally, plays an important role in regulating intracellular signaling events associated with erythroid terminal differentiation. This chain is Ankyrin repeat domain-containing protein 54 (Ankrd54), found in Rattus norvegicus (Rat).